Consider the following 552-residue polypeptide: Rqc2 homolog RqcH (552 aa).

2 coiled-coil regions span residues 271–317 (RDRV…QKGE) and 357–398 (NAQR…MLGQ).

The protein belongs to the NEMF family. As to quaternary structure, associates with stalled 50S ribosomal subunits, binds to RqcH. Recombinant protein interacts with the N-terminal 30 kDa of human fibronectin (FN1).

Functionally, key component of the ribosome quality control system (RQC), a ribosome-associated complex that mediates the extraction of incompletely synthesized nascent chains from stalled ribosomes and their subsequent degradation. RqcH recruits Ala-charged tRNA, and with RqcP directs the elongation of stalled nascent chains on 50S ribosomal subunits, leading to non-templated C-terminal alanine extensions (Ala tail). The Ala tail promotes nascent chain degradation. May add between 1 and at least 8 Ala residues. Binds to stalled 50S ribosomal subunits. This Streptococcus suis (strain 05ZYH33) protein is Rqc2 homolog RqcH.